Reading from the N-terminus, the 691-residue chain is DNA ligase (691 aa).

NAD(+) is bound by residues 41 to 45 (DAEFD), 91 to 92 (SL), and E121. The active-site N6-AMP-lysine intermediate is K123. Positions 144, 184, 300, and 324 each coordinate NAD(+). Zn(2+) contacts are provided by C418, C421, C437, and C443. One can recognise a BRCT domain in the interval 607 to 691 (SVPRTLAGLT…LLADGPASRT (85 aa)).

It belongs to the NAD-dependent DNA ligase family. LigA subfamily. Mg(2+) serves as cofactor. The cofactor is Mn(2+).

It carries out the reaction NAD(+) + (deoxyribonucleotide)n-3'-hydroxyl + 5'-phospho-(deoxyribonucleotide)m = (deoxyribonucleotide)n+m + AMP + beta-nicotinamide D-nucleotide.. In terms of biological role, DNA ligase that catalyzes the formation of phosphodiester linkages between 5'-phosphoryl and 3'-hydroxyl groups in double-stranded DNA using NAD as a coenzyme and as the energy source for the reaction. It is essential for DNA replication and repair of damaged DNA. The chain is DNA ligase from Mycobacterium tuberculosis (strain ATCC 25177 / H37Ra).